A 315-amino-acid polypeptide reads, in one-letter code: MRNQMKIALLVGLAIVCIGLFLFYDLGNWDYTLPRRIKKVAAIVLTGGAIAFSTMIFQTITNNRILTPSILGLDSLYMLIQTGIIFLFGSANMVIMNKNINFIISVLLMILFSLVLYQIMFKGEGRNIFFLLLIGIVFGTLFSSLSSFMQMLIDPNEFQVVQDKMFASFNNINTDLLWLAFIIFLLTGVYVWRFTKFFDVLSLGREHAVNLGIDYDKVVKQMLIVVAILVSVSTALVGPIMFLGLLVVNLAREFLKTYKHSYLIAGSVFISIIALVGGQFVVEKVFTFSTTLSVIINFAGGIYFIYLLLKENKSW.

The next 9 helical transmembrane spans lie at 7–27 (IALL…YDLG), 40–60 (VAAI…FQTI), 76–96 (LYML…MVIM), 100–120 (INFI…YQIM), 128–148 (IFFL…LSSF), 172–192 (INTD…VYVW), 223–243 (LIVV…IMFL), 262–282 (YLIA…QFVV), and 288–308 (FSTT…IYLL).

This sequence belongs to the binding-protein-dependent transport system permease family. FecCD subfamily. As to quaternary structure, the complex is composed of two ATP-binding proteins (YclP), two transmembrane proteins (YclN and YclO) and a solute-binding protein (YclQ).

Its subcellular location is the cell membrane. Its function is as follows. Part of the ABC transporter complex YclNOPQ involved in uptake of ferric-petrobactin. Petrobactin is a photoreactive 3,4-catecholate siderophore produced by many members of the B.cereus group, including B.anthracis. Probably responsible for the translocation of the substrate across the membrane. The chain is Petrobactin import system permease protein YclO (yclO) from Bacillus subtilis (strain 168).